Consider the following 203-residue polypeptide: Glycerol-3-phosphate acyltransferase (203 aa).

Helical transmembrane passes span 5 to 25 (IIYL…LAQI), 58 to 78 (TLAV…ILMA), 87 to 107 (ILWT…YLKF), 118 to 138 (GVLA…WFII), 150 to 170 (LGAM…IPVI), and 176 to 196 (IFII…RLIG).

Belongs to the PlsY family. As to quaternary structure, probably interacts with PlsX.

The protein localises to the cell inner membrane. It catalyses the reaction an acyl phosphate + sn-glycerol 3-phosphate = a 1-acyl-sn-glycero-3-phosphate + phosphate. It participates in lipid metabolism; phospholipid metabolism. Catalyzes the transfer of an acyl group from acyl-phosphate (acyl-PO(4)) to glycerol-3-phosphate (G3P) to form lysophosphatidic acid (LPA). This enzyme utilizes acyl-phosphate as fatty acyl donor, but not acyl-CoA or acyl-ACP. The polypeptide is Glycerol-3-phosphate acyltransferase (Campylobacter lari (strain RM2100 / D67 / ATCC BAA-1060)).